The following is an 86-amino-acid chain: Small ribosomal subunit protein uS17 (86 aa).

The protein belongs to the universal ribosomal protein uS17 family. In terms of assembly, part of the 30S ribosomal subunit.

Its function is as follows. One of the primary rRNA binding proteins, it binds specifically to the 5'-end of 16S ribosomal RNA. In Bifidobacterium longum (strain DJO10A), this protein is Small ribosomal subunit protein uS17.